The primary structure comprises 153 residues: Endoribonuclease YbeY (153 aa).

3 residues coordinate Zn(2+): histidine 114, histidine 118, and histidine 124.

The protein belongs to the endoribonuclease YbeY family. It depends on Zn(2+) as a cofactor.

It localises to the cytoplasm. Functionally, single strand-specific metallo-endoribonuclease involved in late-stage 70S ribosome quality control and in maturation of the 3' terminus of the 16S rRNA. The protein is Endoribonuclease YbeY of Finegoldia magna (strain ATCC 29328 / DSM 20472 / WAL 2508) (Peptostreptococcus magnus).